The chain runs to 327 residues: GMP reductase (327 aa).

The Thioimidate intermediate role is filled by Cys-176. 205–228 (IIADGGIRTHGDIVKSIRFGATMV) is an NADP(+) binding site.

This sequence belongs to the IMPDH/GMPR family. GuaC type 2 subfamily.

The catalysed reaction is IMP + NH4(+) + NADP(+) = GMP + NADPH + 2 H(+). In terms of biological role, catalyzes the irreversible NADPH-dependent deamination of GMP to IMP. It functions in the conversion of nucleobase, nucleoside and nucleotide derivatives of G to A nucleotides, and in maintaining the intracellular balance of A and G nucleotides. The protein is GMP reductase of Helicobacter pylori (strain ATCC 700392 / 26695) (Campylobacter pylori).